The primary structure comprises 415 residues: Phosphoglycerate kinase (415 aa).

(2R)-3-phosphoglycerate contacts are provided by V22, D23, F24, N25, Q37, R38, S61, H62, G64, L120, R121, H168, and R169. ADP is bound at residue G212. Position 212 (G212) interacts with CDP. A213 and K214 together coordinate AMP. Residue A213 coordinates ATP. Mg(2+) is bound at residue A213. D217 is a binding site for CDP. D217 contacts Mg(2+). K218 contacts AMP. Position 218 (K218) interacts with ATP. G236 is a binding site for ADP. Position 236 (G236) interacts with CDP. 2 residues coordinate AMP: G237 and G311. 2 residues coordinate ATP: G237 and G311. G336 and F341 together coordinate CDP. Position 341 (F341) interacts with ADP. E342 serves as a coordination point for AMP. Residues E342, D373, and T374 each contribute to the ATP site. Position 373 (D373) interacts with Mg(2+).

This sequence belongs to the phosphoglycerate kinase family. As to quaternary structure, monomer. Mg(2+) serves as cofactor.

The protein localises to the cytoplasm. It catalyses the reaction (2R)-3-phosphoglycerate + ATP = (2R)-3-phospho-glyceroyl phosphate + ADP. Its pathway is carbohydrate degradation; glycolysis; pyruvate from D-glyceraldehyde 3-phosphate: step 2/5. In Opisthorchis sinensis (Clonorchis sinensis), this protein is Phosphoglycerate kinase (PGK).